The primary structure comprises 1220 residues: MAAAAGAPPPGPPQPPPPPPPEESSDSEPEAEPGSPQKLIRKVSTSGQIRQKTILKEGMLTKQNNSFQRSKRRYFKLRGRTLYYAKTAKSIIFDEVDLTDASVAESSTKNVNNSFTVITPCRKLILCADNRKEMEDWIAALKTVQNKEHFEPTQYSMDHFSGMHNWYACSHARPTYCNVCREVLSGVTSHGLSCEVCKFKAHKRCAVRATSNCKWTTLASIGKDIIEDEDGIAMPHQWLEGNLPVSAKCIVCDKTCGSVLRLQDWRCLWCKAMVHTSCKESLVMKCPLGLCKVSVIPPTALNSIDSDGFWKATCPPSCTSPLLVFVNSKSGDNQGVKFLRRFKQLLNPAQVFDLMNGGPHLGLRLFQKFDTFRILVCGGDGSVGWVLSEIDSLNLHKQCQLGVLPLGTGNDLARVLGWGSACDDDTQLPQILAKLERASTKMLDRWSVMAYETKLPRQASSSTVTEDFSEDSEVQQILFYEDSVAAHLSKILTSDQHSVVISSAKVLCETVKDFVARVGKAYEKTTESSQESEVMAKKCSVLKEKLDSLLKTLDDESQASSSLSNPPPTIAEEAEDGDGSGNICSSTGDHLVGSACPSRPQIFRPREQLMLRANSLKKAIRQIIEHTEKAVDEQNAQTQEQQGFVLGLSESEKKDLKTDNRVCTSSVHSESCVIAKGRSQRKASRAPCEKLVSKGLSLGSSASLPPGTGSRDSLPALNTKILYPSVRAGMSGSLPGGSVISRLLINADPFNAEPENLEYYTEKCVMNNYFGIGLDAKISLDFNNKRDEHPEKCRSRTKNMMWYGVLGTKELLHRTYRNLEQKVLLECDGRPIPLPSLQGIAVLNIPSYAGGTNFWGGTKEDDTFAAPSFDDKILEVVAVFGSMQMAVSRVIKLQHHRIAQCRTVKISILGDEGVPVQVDGEAWIQPPGYIRIVHKNRAQTLTRDRAFENTLKSWEDKQKCELSRPPSFSLHPEILSEEEATQMDQFGQAAGGLIHSIREIAQSHRAMEQELAHAVNASSKAMERVYGKPRTAEGLNCSFVLEMVNNIRALRSETELLLAGKMALQLDPPQKERLGAALIEMDQQLRKLTDTPWLCQPLEPGEEESLQQNVMLDLTKRSRSGKFRLVTKFKKEKNNKNKEVHSNLGGPVHLWGTEEVAAWLEHLSLCEYKDIFTRHDIRGSELLHLERRDLKDLGVTKVGHMKRILCGIKELSRSSPAAEA.

The segment at 1-47 (MAAAAGAPPPGPPQPPPPPPPEESSDSEPEAEPGSPQKLIRKVSTSG) is disordered. The regulates association with membranes stretch occupies residues 1 to 52 (MAAAAGAPPPGPPQPPPPPPPEESSDSEPEAEPGSPQKLIRKVSTSGQIRQK). Over residues 7-22 (APPPGPPQPPPPPPPE) the composition is skewed to pro residues. Positions 53 to 146 (TILKEGMLTK…WIAALKTVQN (94 aa)) constitute a PH domain. Phorbol-ester/DAG-type zinc fingers lie at residues 163–213 (MHNW…TSNC) and 235–286 (PHQW…VMKC). One can recognise a DAGKc domain in the interval 317-451 (SCTSPLLVFV…MLDRWSVMAY (135 aa)). The disordered stretch occupies residues 554 to 584 (DDESQASSSLSNPPPTIAEEAEDGDGSGNIC). Positions 1151-1214 (WGTEEVAAWL…LCGIKELSRS (64 aa)) constitute an SAM domain.

It belongs to the eukaryotic diacylglycerol kinase family. In terms of assembly, homooligomer. Monomer. Interacts with AP2A2; regulates clathrin-dependent endocytosis. In terms of tissue distribution, widely expressed.

It localises to the cell membrane. The protein resides in the membrane. The protein localises to the clathrin-coated pit. It is found in the cytoplasm. It catalyses the reaction a 1,2-diacyl-sn-glycerol + ATP = a 1,2-diacyl-sn-glycero-3-phosphate + ADP + H(+). The catalysed reaction is 1,2-di-(9Z-octadecenoyl)-sn-glycerol + ATP = 1,2-di-(9Z-octadecenoyl)-sn-glycero-3-phosphate + ADP + H(+). The enzyme catalyses 1-octadecanoyl-2-(5Z,8Z,11Z,14Z-eicosatetraenoyl)-sn-glycerol + ATP = 1-octadecanoyl-2-(5Z,8Z,11Z,14Z-eicosatetraenoyl)-sn-glycero-3-phosphate + ADP + H(+). Its pathway is lipid metabolism; glycerolipid metabolism. Functionally, diacylglycerol kinase that converts diacylglycerol/DAG into phosphatidic acid/phosphatidate/PA and regulates the respective levels of these two bioactive lipids. Thereby, acts as a central switch between the signaling pathways activated by these second messengers with different cellular targets and opposite effects in numerous biological processes. By controlling the levels of diacylglycerol, regulates for instance the PKC and EGF receptor signaling pathways and plays a crucial role during development. May also regulate clathrin-dependent endocytosis. The sequence is that of Diacylglycerol kinase delta from Mus musculus (Mouse).